A 362-amino-acid chain; its full sequence is UPF0283 membrane protein Arad_2632 (362 aa).

Residues 1 to 11 are compositionally biased toward basic and acidic residues; the sequence is MTKPTEDDPKG. The interval 1–47 is disordered; the sequence is MTKPTEDDPKGISRRPAAFSLEQEASREGAHTKTTAETPRRKPQSFD. 2 consecutive transmembrane segments (helical) span residues 82–102 and 118–138; these read FSFGKVALSAFGILVSLAFGL and LGYTALTVLAIGILAVLAIVV.

It belongs to the UPF0283 family.

The protein localises to the cell inner membrane. The polypeptide is UPF0283 membrane protein Arad_2632 (Rhizobium rhizogenes (strain K84 / ATCC BAA-868) (Agrobacterium radiobacter)).